A 1277-amino-acid polypeptide reads, in one-letter code: Clustered mitochondria protein 1 (1277 aa).

2 disordered regions span residues 19 to 39 (LPKE…QSSK) and 148 to 176 (LPLG…NTFK). Positions 27–36 (HNTKHLKKTQ) are enriched in basic residues. The span at 153–176 (IKERSKQEEKDEKSDPEEKKNTFK) shows a compositional bias: basic and acidic residues. Positions 339–596 (PPNNPDYLRL…NTYPLDINFA (258 aa)) constitute a Clu domain. TPR repeat units lie at residues 704-738 (GINM…VEQD), 1020-1053 (AEKY…YERV), and 1148-1181 (GYTE…FTKQ). The disordered stretch occupies residues 1212–1277 (LAQDQMSTTG…TNNKKKHGKK (66 aa)). The segment covering 1235 to 1249 (KKDDVKPELANKSVD) has biased composition (basic and acidic residues). A Phosphoserine modification is found at Ser-1247. A compositionally biased stretch (basic residues) spans 1264–1277 (SKNKTNNKKKHGKK).

This sequence belongs to the CLU family. May associate with the eukaryotic translation initiation factor 3 (eIF-3) complex. Associates with the 80S ribosome.

Its subcellular location is the cytoplasm. In terms of biological role, mRNA-binding protein involved in proper cytoplasmic distribution of mitochondria. The chain is Clustered mitochondria protein 1 from Saccharomyces cerevisiae (strain ATCC 204508 / S288c) (Baker's yeast).